The following is a 1416-amino-acid chain: K homology domain-containing protein 4 (1416 aa).

Disordered regions lie at residues 25 to 76, 108 to 174, 196 to 225, 255 to 320, and 341 to 385; these read NPNG…TSMR, KAEA…TRSS, VNSS…LSQS, QNDE…FPGR, and SSLN…MPKP. Low complexity-rich tracts occupy residues 196–213, 273–285, and 341–350; these read VNSS…SANH, QSSF…LDQL, and SSLNPPASGS. A compositionally biased stretch (polar residues) spans 357 to 369; it reads GLSSAQPLRSPQP. 5 consecutive KH domains span residues 412–504, 508–594, 747–816, 817–892, and 900–968; these read FKST…VILD, GLRS…QVSM, FEVR…EELP, AEMS…SVME, and DYIS…DHVP. 2 disordered regions span residues 1215–1240 and 1289–1416; these read AGVS…SGHR and HASG…FDRA. Polar residues predominate over residues 1219 to 1239; that stretch reads VPTSGGIQFPSQPSLHQQSGH. Residues 1343–1374 show a composition bias toward low complexity; sequence QQQAQQQLQYQQQQQQQQQQQQQPGYGMPHQP. Positions 1391–1402 are enriched in polar residues; the sequence is RNTQNPDSTTMD.

RNA-binding protein that recognizes the sequence AUACCC via its tandem KH domains 3 and 4, probably in order to promote mRNA instability. Plays an essential role in filamentous growth and virulence. This chain is K homology domain-containing protein 4, found in Mycosarcoma maydis (Corn smut fungus).